A 238-amino-acid polypeptide reads, in one-letter code: UPF0328 protein ECU07_0010 (238 aa).

Disordered regions lie at residues 1 to 154 (MAAP…NTQR) and 211 to 238 (GRLH…LATL). Positions 106–128 (HTEGCHTHEANPEPNTKHTETES) are enriched in basic and acidic residues. Positions 129–152 (PKPQTSTQHHTPITIPSSLLSQNT) are enriched in polar residues.

It belongs to the UPF0328 family.

The chain is UPF0328 protein ECU07_0010 from Encephalitozoon cuniculi (strain GB-M1) (Microsporidian parasite).